A 272-amino-acid chain; its full sequence is Cytochrome b-c1 complex subunit Rieske-1, mitochondrial (272 aa).

The transit peptide at 1 to 60 directs the protein to the mitochondrion; the sequence is MLRVAGRRLFSVSQRSSTATSFVVSRDHTLSDGGGDSSSAPRSLPSADLSSYHRSLIRGF. Positions 27-46 are disordered; sequence DHTLSDGGGDSSSAPRSLPS. The Mitochondrial matrix portion of the chain corresponds to 61-109; that stretch reads SSQVLAQGNEIGFGSEVPATVEAVKTPNSKIVYDDHNHERYPPGDPSKR. Residues 110-132 traverse the membrane as a helical segment; the sequence is AFAYFVLSGGRFVYASVLRLLVL. At 133 to 272 the chain is on the mitochondrial intermembrane side; that stretch reads KLIVSMSASK…FLEENKLLIG (140 aa). The Rieske domain maps to 201–270; that stretch reads VRVKNPEWLV…YSFLEENKLL (70 aa). [2Fe-2S] cluster-binding residues include cysteine 215, histidine 217, cysteine 234, and histidine 237. Cysteines 220 and 236 form a disulfide.

This sequence belongs to the Rieske iron-sulfur protein family. In terms of assembly, component of the ubiquinol-cytochrome c oxidoreductase (cytochrome b-c1 complex, complex III, CIII), a multisubunit enzyme composed of 10 subunits. The complex is composed of 3 respiratory subunits cytochrome b (MT-CYB), cytochrome c1 (CYC1-1 or CYC1-2) and Rieske protein (UCR1-1 or UCR1-2), 2 core protein subunits MPPalpha1 (or MPPalpha2) and MPPB, and 5 low-molecular weight protein subunits QCR7-1 (or QCR7-2), UCRQ-1 (or UCRQ-2), QCR9, UCRY and probably QCR6-1 (or QCR6-2). The complex exists as an obligatory dimer and forms supercomplexes (SCs) in the inner mitochondrial membrane with NADH-ubiquinone oxidoreductase (complex I, CI), resulting in different assemblies (supercomplexes SCI(1)III(2) and SCI(2)III(4)). It depends on [2Fe-2S] cluster as a cofactor.

It is found in the mitochondrion inner membrane. It catalyses the reaction a quinol + 2 Fe(III)-[cytochrome c](out) = a quinone + 2 Fe(II)-[cytochrome c](out) + 2 H(+)(out). Its function is as follows. Component of the ubiquinol-cytochrome c oxidoreductase, a multisubunit transmembrane complex that is part of the mitochondrial electron transport chain which drives oxidative phosphorylation. The respiratory chain contains 3 multisubunit complexes succinate dehydrogenase (complex II, CII), ubiquinol-cytochrome c oxidoreductase (cytochrome b-c1 complex, complex III, CIII) and cytochrome c oxidase (complex IV, CIV), that cooperate to transfer electrons derived from NADH and succinate to molecular oxygen, creating an electrochemical gradient over the inner membrane that drives transmembrane transport and the ATP synthase. The cytochrome b-c1 complex catalyzes electron transfer from ubiquinol to cytochrome c, linking this redox reaction to translocation of protons across the mitochondrial inner membrane, with protons being carried across the membrane as hydrogens on the quinol. In the process called Q cycle, 2 protons are consumed from the matrix, 4 protons are released into the intermembrane space and 2 electrons are passed to cytochrome c. The Rieske protein is a catalytic core subunit containing a [2Fe-2S] iron-sulfur cluster. It cycles between 2 conformational states during catalysis to transfer electrons from the quinol bound in the Q(0) site in cytochrome b to cytochrome c1. This is Cytochrome b-c1 complex subunit Rieske-1, mitochondrial from Arabidopsis thaliana (Mouse-ear cress).